The following is a 294-amino-acid chain: Acetylglutamate kinase (294 aa).

Substrate-binding positions include Gly63 to Gly64, Arg85, and Asn188.

Belongs to the acetylglutamate kinase family. ArgB subfamily.

Its subcellular location is the cytoplasm. The enzyme catalyses N-acetyl-L-glutamate + ATP = N-acetyl-L-glutamyl 5-phosphate + ADP. Its pathway is amino-acid biosynthesis; L-arginine biosynthesis; N(2)-acetyl-L-ornithine from L-glutamate: step 2/4. In terms of biological role, catalyzes the ATP-dependent phosphorylation of N-acetyl-L-glutamate. This chain is Acetylglutamate kinase, found in Methanococcus maripaludis (strain DSM 14266 / JCM 13030 / NBRC 101832 / S2 / LL).